The following is a 469-amino-acid chain: Glutamine synthetase (469 aa).

One can recognise a GS beta-grasp domain in the interval histidine 12–threonine 97. A GS catalytic domain is found at proline 105 to valine 469. Residues glutamate 130 and glutamate 132 each contribute to the Mg(2+) site. Glutamate 208 contacts ATP. Residues glutamate 213 and glutamate 221 each contribute to the Mg(2+) site. L-glutamate contacts are provided by residues asparagine 265–glycine 266 and glycine 266. Histidine 270 is a Mg(2+) binding site. ATP contacts are provided by residues histidine 272–serine 274 and serine 274. L-glutamate is bound by residues arginine 322, glutamate 328, and arginine 340. Arginine 340, arginine 345, and lysine 353 together coordinate ATP. Glutamate 358 is a binding site for Mg(2+). Arginine 360 contacts L-glutamate. Tyrosine 398 carries the post-translational modification O-AMP-tyrosine.

Belongs to the glutamine synthetase family. As to quaternary structure, oligomer of 12 subunits arranged in the form of two hexameric ring. The cofactor is Mg(2+).

Its subcellular location is the cytoplasm. The enzyme catalyses L-glutamate + NH4(+) + ATP = L-glutamine + ADP + phosphate + H(+). With respect to regulation, the activity of this enzyme could be controlled by adenylation under conditions of abundant glutamine. Catalyzes the ATP-dependent biosynthesis of glutamine from glutamate and ammonia. This Pseudomonas aeruginosa (strain ATCC 15692 / DSM 22644 / CIP 104116 / JCM 14847 / LMG 12228 / 1C / PRS 101 / PAO1) protein is Glutamine synthetase.